We begin with the raw amino-acid sequence, 443 residues long: GTPase Der (443 aa).

EngA-type G domains lie at Pro-3–Pro-168 and Val-178–Ser-353. Residues Gly-9–Ser-16, Asp-56–Tyr-60, Asn-120–Glu-123, Gly-184–Ser-191, Asp-231–Leu-235, and Asn-296–Asp-299 each bind GTP. Residues Gln-354 to Asn-438 form the KH-like domain.

The protein belongs to the TRAFAC class TrmE-Era-EngA-EngB-Septin-like GTPase superfamily. EngA (Der) GTPase family. Associates with the 50S ribosomal subunit.

In terms of biological role, GTPase that plays an essential role in the late steps of ribosome biogenesis. The protein is GTPase Der of Chlorobium chlorochromatii (strain CaD3).